Reading from the N-terminus, the 97-residue chain is Aspartyl/glutamyl-tRNA(Asn/Gln) amidotransferase subunit C (97 aa).

The protein belongs to the GatC family. As to quaternary structure, heterotrimer of A, B and C subunits.

It carries out the reaction L-glutamyl-tRNA(Gln) + L-glutamine + ATP + H2O = L-glutaminyl-tRNA(Gln) + L-glutamate + ADP + phosphate + H(+). It catalyses the reaction L-aspartyl-tRNA(Asn) + L-glutamine + ATP + H2O = L-asparaginyl-tRNA(Asn) + L-glutamate + ADP + phosphate + 2 H(+). Allows the formation of correctly charged Asn-tRNA(Asn) or Gln-tRNA(Gln) through the transamidation of misacylated Asp-tRNA(Asn) or Glu-tRNA(Gln) in organisms which lack either or both of asparaginyl-tRNA or glutaminyl-tRNA synthetases. The reaction takes place in the presence of glutamine and ATP through an activated phospho-Asp-tRNA(Asn) or phospho-Glu-tRNA(Gln). The polypeptide is Aspartyl/glutamyl-tRNA(Asn/Gln) amidotransferase subunit C (Prochlorococcus marinus (strain MIT 9515)).